The following is a 487-amino-acid chain: E3 ubiquitin-protein ligase TRIM50 (487 aa).

The RING-type zinc finger occupies 16–57; the sequence is CPICLEVFKEPLMLQCGHSYCKGCLVSLSCHLDAELRCPVCR. The segment at 84 to 125 adopts a B box-type zinc-finger fold; it reads PEPKVCVHHRNPLSLFCEKDQELICGLCGLLGSHQHHPVTPV. Residues Cys89, His92, Cys111, and His117 each coordinate Zn(2+). 2 coiled-coil regions span residues 125–169 and 204–235; these read VSTV…NESD and LVAS…FGNE. The region spanning 276-475 is the B30.2/SPRY domain; that stretch reads DIKLTVWKRL…LPMVLPPPSG (200 aa). At Lys373 the chain carries N6-acetyllysine. The segment at 468 to 487 is disordered; the sequence is MVLPPPSGPGPLSPEQPTKL. Positions 469-481 are enriched in pro residues; sequence VLPPPSGPGPLSP.

This sequence belongs to the TRIM/RBCC family. As to quaternary structure, can form dimers and trimers. Interacts with several E2 ubiquitin-conjugating enzymes, including UBE2L6, UBE2E1, UBE2E3. No interaction with UBE2H. Interacts with BECN1. Interacts with SQSTM1. Interacts with NLRP3. Auto-ubiquitinated. Post-translationally, acetylated by EP300 and KAT2B. HDAC6 drives TRIM50 deacetylation. Acetylation antagonizes with TRIM50 ubiquitination.

The protein localises to the cytoplasm. The catalysed reaction is S-ubiquitinyl-[E2 ubiquitin-conjugating enzyme]-L-cysteine + [acceptor protein]-L-lysine = [E2 ubiquitin-conjugating enzyme]-L-cysteine + N(6)-ubiquitinyl-[acceptor protein]-L-lysine.. In terms of biological role, E3 ubiquitin-protein ligase that ubiquitinates Beclin-1/BECN1 in a 'Lys-63'-dependent manner enhancing its binding to ULK1. In turn, promotes starvation-induced autophagy activation. Also interacts with p62/SQSTM1 protein and thereby induces the formation and the autophagy clearance of aggresome-associated polyubiquitinated proteins through HDAC6 interaction. Also promotes NLRP3 inflammasome activation by directly inducing NLRP3 oligomerization independent of its E3 ligase function. In Homo sapiens (Human), this protein is E3 ubiquitin-protein ligase TRIM50.